Reading from the N-terminus, the 175-residue chain is Peptide deformylase (175 aa).

Cys-94 and His-136 together coordinate Fe cation. Glu-137 is an active-site residue. Residue His-140 participates in Fe cation binding.

Belongs to the polypeptide deformylase family. The cofactor is Fe(2+).

It carries out the reaction N-terminal N-formyl-L-methionyl-[peptide] + H2O = N-terminal L-methionyl-[peptide] + formate. Removes the formyl group from the N-terminal Met of newly synthesized proteins. Requires at least a dipeptide for an efficient rate of reaction. N-terminal L-methionine is a prerequisite for activity but the enzyme has broad specificity at other positions. The sequence is that of Peptide deformylase from Brucella suis biovar 1 (strain 1330).